A 74-amino-acid chain; its full sequence is Neuropeptide-like protein 33 (74 aa).

Positions 1-21 are cleaved as a signal peptide; that stretch reads MISTSLLLVVLLFAILAIVDA. A Tyrosine amide modification is found at Tyr-72.

It belongs to the YARP (YGGW-amide related peptide) family. In terms of tissue distribution, expressed in hypoderm.

The protein resides in the secreted. May have antifungic activity against D.coniospora. The polypeptide is Neuropeptide-like protein 33 (nlp-33) (Caenorhabditis elegans).